Reading from the N-terminus, the 258-residue chain is uncharacterized protein (258 aa).

This is an uncharacterized protein from Escherichia coli O157:H7.